Reading from the N-terminus, the 632-residue chain is Effector protein hopAD1 (632 aa).

Positions 13–34 (TAVDSSLPTSATSQTISNTKSR) are disordered. Residues 15–32 (VDSSLPTSATSQTISNTK) show a composition bias toward polar residues.

The protein localises to the secreted. The protein is Effector protein hopAD1 (hopAD1) of Pseudomonas syringae pv. tomato (strain ATCC BAA-871 / DC3000).